We begin with the raw amino-acid sequence, 522 residues long: 3-octaprenyl-4-hydroxybenzoate carboxy-lyase (522 aa).

Residue Asn-181 participates in Mn(2+) binding. Prenylated FMN is bound by residues 184–186 (IYR), 198–200 (RWL), and 203–204 (RG). Glu-247 provides a ligand contact to Mn(2+). The active-site Proton donor is Asp-322.

Belongs to the UbiD family. As to quaternary structure, homohexamer. Requires prenylated FMN as cofactor. It depends on Mn(2+) as a cofactor.

It localises to the cell membrane. The catalysed reaction is a 4-hydroxy-3-(all-trans-polyprenyl)benzoate + H(+) = a 2-(all-trans-polyprenyl)phenol + CO2. The protein operates within cofactor biosynthesis; ubiquinone biosynthesis. Its function is as follows. Catalyzes the decarboxylation of 3-octaprenyl-4-hydroxy benzoate to 2-octaprenylphenol, an intermediate step in ubiquinone biosynthesis. In Paraburkholderia xenovorans (strain LB400), this protein is 3-octaprenyl-4-hydroxybenzoate carboxy-lyase.